Consider the following 353-residue polypeptide: MSSKKKTKPVLPPGPVMVDVAGTTLTKDEKRRLRNPLVGGVILFARNFTDRRQLCALTRAIHKARKEPLLIAVDHEGGRVQRFRDDGFTALPPMQELGKLWDRDPLAAMRLATEAGYVLAAELRACGVDLSFTPVLDLDYGVSKVIGNRAFHHDARVVTMLSRALAQGLALAGMAACGKHFPGHGFVGADSHHEIPVDPRPLARILKDDAAPYAWLGDLVMPAVMPAHVIYPKVDAQPAGFSRRWVSEILRERLGYDGVVFSDDLTMEGASVAGDILARAEAALGAGCDMVLVCNRPDLADELLDRLQVQHPAASVERIRRLMPRFAAPDWDTLQNDSRYQHARRLQSQIVSG.

Substrate-binding positions include Asp-74, Arg-82, Arg-149, and 179–180; that span reads KH. His-192 functions as the Proton donor/acceptor in the catalytic mechanism. The Nucleophile role is filled by Asp-263.

Belongs to the glycosyl hydrolase 3 family. NagZ subfamily.

The protein localises to the cytoplasm. It catalyses the reaction Hydrolysis of terminal non-reducing N-acetyl-D-hexosamine residues in N-acetyl-beta-D-hexosaminides.. It participates in cell wall biogenesis; peptidoglycan recycling. Its function is as follows. Plays a role in peptidoglycan recycling by cleaving the terminal beta-1,4-linked N-acetylglucosamine (GlcNAc) from peptide-linked peptidoglycan fragments, giving rise to free GlcNAc, anhydro-N-acetylmuramic acid and anhydro-N-acetylmuramic acid-linked peptides. The chain is Beta-hexosaminidase from Bordetella bronchiseptica (strain ATCC BAA-588 / NCTC 13252 / RB50) (Alcaligenes bronchisepticus).